The following is a 189-amino-acid chain: Chitin synthase 3 (189 aa).

It belongs to the chitin synthase family. Class II subfamily.

The protein resides in the cell membrane. It catalyses the reaction [(1-&gt;4)-N-acetyl-beta-D-glucosaminyl](n) + UDP-N-acetyl-alpha-D-glucosamine = [(1-&gt;4)-N-acetyl-beta-D-glucosaminyl](n+1) + UDP + H(+). Its function is as follows. Polymerizes chitin, a structural polymer of the cell wall and septum, by transferring the sugar moiety of UDP-GlcNAc to the non-reducing end of the growing chitin polymer. This chain is Chitin synthase 3 (CHS3), found in Ajellomyces capsulatus (Darling's disease fungus).